We begin with the raw amino-acid sequence, 379 residues long: UDP-4-amino-4-deoxy-L-arabinose--oxoglutarate aminotransferase (379 aa).

An N6-(pyridoxal phosphate)lysine modification is found at Lys-182.

The protein belongs to the DegT/DnrJ/EryC1 family. ArnB subfamily. As to quaternary structure, homodimer. The cofactor is pyridoxal 5'-phosphate.

The enzyme catalyses UDP-4-amino-4-deoxy-beta-L-arabinose + 2-oxoglutarate = UDP-beta-L-threo-pentopyranos-4-ulose + L-glutamate. The protein operates within nucleotide-sugar biosynthesis; UDP-4-deoxy-4-formamido-beta-L-arabinose biosynthesis; UDP-4-deoxy-4-formamido-beta-L-arabinose from UDP-alpha-D-glucuronate: step 2/3. Its pathway is bacterial outer membrane biogenesis; lipopolysaccharide biosynthesis. Catalyzes the conversion of UDP-4-keto-arabinose (UDP-Ara4O) to UDP-4-amino-4-deoxy-L-arabinose (UDP-L-Ara4N). The modified arabinose is attached to lipid A and is required for resistance to polymyxin and cationic antimicrobial peptides. The polypeptide is UDP-4-amino-4-deoxy-L-arabinose--oxoglutarate aminotransferase (Sodalis glossinidius (strain morsitans)).